Here is a 309-residue protein sequence, read N- to C-terminus: Homoserine O-succinyltransferase (309 aa).

Cysteine 142 acts as the Acyl-thioester intermediate in catalysis. Substrate is bound by residues lysine 163 and serine 192. The Proton acceptor role is filled by histidine 235. The active site involves glutamate 237. Arginine 249 serves as a coordination point for substrate.

This sequence belongs to the MetA family.

The protein resides in the cytoplasm. The catalysed reaction is L-homoserine + succinyl-CoA = O-succinyl-L-homoserine + CoA. The protein operates within amino-acid biosynthesis; L-methionine biosynthesis via de novo pathway; O-succinyl-L-homoserine from L-homoserine: step 1/1. Its function is as follows. Transfers a succinyl group from succinyl-CoA to L-homoserine, forming succinyl-L-homoserine. In Klebsiella pneumoniae (strain 342), this protein is Homoserine O-succinyltransferase.